Here is a 434-residue protein sequence, read N- to C-terminus: Glutamate-1-semialdehyde 2,1-aminomutase 2 (434 aa).

K269 bears the N6-(pyridoxal phosphate)lysine mark.

Belongs to the class-III pyridoxal-phosphate-dependent aminotransferase family. HemL subfamily. As to quaternary structure, homodimer. The cofactor is pyridoxal 5'-phosphate.

The protein resides in the cytoplasm. The enzyme catalyses (S)-4-amino-5-oxopentanoate = 5-aminolevulinate. It participates in porphyrin-containing compound metabolism; protoporphyrin-IX biosynthesis; 5-aminolevulinate from L-glutamyl-tRNA(Glu): step 2/2. This Exiguobacterium sp. (strain ATCC BAA-1283 / AT1b) protein is Glutamate-1-semialdehyde 2,1-aminomutase 2.